The following is a 63-amino-acid chain: Large ribosomal subunit protein uL29 (63 aa).

Belongs to the universal ribosomal protein uL29 family.

The chain is Large ribosomal subunit protein uL29 from Ectopseudomonas mendocina (strain ymp) (Pseudomonas mendocina).